Consider the following 438-residue polypeptide: L-cysteine:1D-myo-inositol 2-amino-2-deoxy-alpha-D-glucopyranoside ligase (438 aa).

Residues 1–27 (MKSWSSRPVPELPGTGTAPRVHDTSTG) are disordered. Zn(2+) is bound at residue Cys-44. L-cysteinyl-5'-AMP-binding positions include 44-47 (CGIT), Thr-59, and 82-84 (NVT). Residues 46 to 56 (ITPYDATHMGH) carry the 'HIGH' region motif. Positions 208–213 (DHGGDP) match the 'ERGGDP' region motif. Trp-249 provides a ligand contact to L-cysteinyl-5'-AMP. Position 253 (Cys-253) interacts with Zn(2+). Residue 271–273 (GSD) participates in L-cysteinyl-5'-AMP binding. His-278 provides a ligand contact to Zn(2+). Val-304 provides a ligand contact to L-cysteinyl-5'-AMP. A 'KMSKS' region motif is present at residues 310–314 (KMSKS).

It belongs to the class-I aminoacyl-tRNA synthetase family. MshC subfamily. As to quaternary structure, monomer. The cofactor is Zn(2+).

It catalyses the reaction 1D-myo-inositol 2-amino-2-deoxy-alpha-D-glucopyranoside + L-cysteine + ATP = 1D-myo-inositol 2-(L-cysteinylamino)-2-deoxy-alpha-D-glucopyranoside + AMP + diphosphate + H(+). In terms of biological role, catalyzes the ATP-dependent condensation of GlcN-Ins and L-cysteine to form L-Cys-GlcN-Ins. This chain is L-cysteine:1D-myo-inositol 2-amino-2-deoxy-alpha-D-glucopyranoside ligase, found in Kocuria rhizophila (strain ATCC 9341 / DSM 348 / NBRC 103217 / DC2201).